The chain runs to 464 residues: Argininosuccinate lyase (464 aa).

This sequence belongs to the lyase 1 family. Argininosuccinate lyase subfamily.

Its subcellular location is the cytoplasm. The enzyme catalyses 2-(N(omega)-L-arginino)succinate = fumarate + L-arginine. It functions in the pathway amino-acid biosynthesis; L-arginine biosynthesis; L-arginine from L-ornithine and carbamoyl phosphate: step 3/3. The chain is Argininosuccinate lyase from Pseudomonas aeruginosa (strain LESB58).